Here is a 183-residue protein sequence, read N- to C-terminus: MDPSQNPNVVHATTIISVRRGGHVAVAGDGQVTLGHTVMKGNARKVRRLGRDGQVLAGFAGAAADAFTLFELFEAKLDKHGQLTRAAVELAKDWRTERRLGKLEALLAVADKETSLIISGTGDVIEPEDGIIAIGSGGSYALSAARALLAHTELDAKTIATEAINIAGDICIYTNRNVVVEEL.

Residue T13 is part of the active site. Residues G168, C171, and T174 each contribute to the Na(+) site.

This sequence belongs to the peptidase T1B family. HslV subfamily. As to quaternary structure, a double ring-shaped homohexamer of HslV is capped on each side by a ring-shaped HslU homohexamer. The assembly of the HslU/HslV complex is dependent on binding of ATP.

Its subcellular location is the cytoplasm. It catalyses the reaction ATP-dependent cleavage of peptide bonds with broad specificity.. Allosterically activated by HslU binding. Functionally, protease subunit of a proteasome-like degradation complex believed to be a general protein degrading machinery. The chain is ATP-dependent protease subunit HslV from Xanthomonas campestris pv. campestris (strain ATCC 33913 / DSM 3586 / NCPPB 528 / LMG 568 / P 25).